Consider the following 27-residue polypeptide: Conotoxin (27 aa).

3 disulfides stabilise this stretch: C2–C16, C6–C18, and C12–C23. Asparagine amide is present on N27.

In terms of tissue distribution, expressed by the venom duct.

The protein resides in the secreted. Its function is as follows. Probable neurotoxin that inhibits ion channels. The sequence is that of Conotoxin from Conus amadis (Amadis cone).